We begin with the raw amino-acid sequence, 279 residues long: Fatty-acid-binding protein 1 (279 aa).

Residues arginine 103, tyrosine 116, and serine 183 each contribute to the dodecanoate site.

Belongs to the chalcone isomerase family. In terms of tissue distribution, expressed in developing cotyledons, young seedlings, roots, seeds, embryos, macrospores, preanthesis and tapetum. Restricted to developing and reproductive tissues.

It localises to the plastid. The protein resides in the chloroplast stroma. Its function is as follows. Fatty-acid-binding protein. Interacts preferentially with saturated fatty acid. May be involved in alpha-linolenic (C18:3) metabolism. This is Fatty-acid-binding protein 1 (FAP1) from Arabidopsis thaliana (Mouse-ear cress).